The sequence spans 260 residues: Snake venom serine proteinase 4a (260 aa).

Positions methionine 1–alanine 18 are cleaved as a signal peptide. Positions glutamine 19–leucine 24 are excised as a propeptide. The 227-residue stretch at valine 25–alanine 251 folds into the Peptidase S1 domain. 6 disulfide bridges follow: cysteine 31-cysteine 163, cysteine 50-cysteine 66, cysteine 98-cysteine 258, cysteine 142-cysteine 212, cysteine 174-cysteine 191, and cysteine 202-cysteine 227. Catalysis depends on histidine 65, which acts as the Charge relay system. N-linked (GlcNAc...) asparagine glycosylation is present at asparagine 103. Aspartate 110 (charge relay system) is an active-site residue. The active-site Charge relay system is serine 206.

Belongs to the peptidase S1 family. Snake venom subfamily. As to quaternary structure, monomer. Expressed by the venom gland.

The protein resides in the secreted. Snake venom serine protease that may act in the hemostasis system of the prey. This is Snake venom serine proteinase 4a from Crotalus adamanteus (Eastern diamondback rattlesnake).